An 81-amino-acid polypeptide reads, in one-letter code: Cytotoxin 1c (81 aa).

Residues 1-21 (MKTLLLTLVVVTIVCLDLGYT) form the signal peptide. Intrachain disulfides connect Cys24-Cys42, Cys35-Cys59, Cys63-Cys74, and Cys75-Cys80.

Belongs to the three-finger toxin family. Short-chain subfamily. Type IA cytotoxin sub-subfamily. Monomer in solution; Homodimer and oligomer in the presence of negatively charged lipids forming a pore with a size ranging between 20 and 30 Angstroms. Expressed by the venom gland.

The protein localises to the secreted. It is found in the target cell membrane. Its function is as follows. Shows cytolytic activity on many different cells by forming pore in lipid membranes. In vivo, increases heart rate or kills the animal by cardiac arrest. In addition, it binds to heparin with high affinity, interacts with Kv channel-interacting protein 1 (KCNIP1) in a calcium-independent manner, and binds to integrin alpha-V/beta-3 (ITGAV/ITGB3) with moderate affinity. This chain is Cytotoxin 1c, found in Naja atra (Chinese cobra).